We begin with the raw amino-acid sequence, 442 residues long: Trigger factor (442 aa).

Residues 163–248 (YDRVTINYCI…IIKIEKKQEL (86 aa)) form the PPIase FKBP-type domain.

This sequence belongs to the FKBP-type PPIase family. Tig subfamily.

It localises to the cytoplasm. It catalyses the reaction [protein]-peptidylproline (omega=180) = [protein]-peptidylproline (omega=0). Its function is as follows. Involved in protein export. Acts as a chaperone by maintaining the newly synthesized protein in an open conformation. Functions as a peptidyl-prolyl cis-trans isomerase. The polypeptide is Trigger factor (Buchnera aphidicola subsp. Acyrthosiphon pisum (strain 5A)).